The primary structure comprises 743 residues: Pentatricopeptide repeat-containing protein At2g16880 (743 aa).

PPR repeat units follow at residues 130-164 (SKALFDIALSAYLHEGKPHVALQIFQKMIRLKLKP), 165-202 (NLLTCNTLLIGLVRYPSSFSISSAREVFDDMVKIGVSL), 203-233 (NVQTFNVLVNGYCLEGKLEDALGMLERMVSE), 239-273 (DNVTYNTILKAMSKKGRLSDLKELLLDMKKNGLVP), 274-308 (NRVTYNNLVYGYCKLGSLKEAFQIVELMKQTNVLP), 309-343 (DLCTYNILINGLCNAGSMREGLELMDAMKSLKLQP), 344-378 (DVVTYNTLIDGCFELGLSLEARKLMEQMENDGVKA), 379-414 (NQVTHNISLKWLCKEEKREAVTRKVKELVDMHGFSP), 415-449 (DIVTYHTLIKAYLKVGDLSGALEMMREMGQKGIKM), 450-484 (NTITLNTILDALCKERKLDEAHNLLNSAHKRGFIV), 485-519 (DEVTYGTLIMGFFREEKVEKALEMWDEMKKVKITP), 520-554 (TVSTFNSLIGGLCHHGKTELAMEKFDELAESGLLP), 555-589 (DDSTFNSIILGYCKEGRVEKAFEFYNESIKHSFKP), 590-620 (DNYTCNILLNGLCKEGMTEKALNFFNTLIEE), 624-658 (DTVTYNTMISAFCKDKKLKEAYDLLSEMEEKGLEP), and 659-689 (DRFTYNSFISLLMEDGKLSETDELLKKFSGK).

This sequence belongs to the PPR family. P subfamily.

This chain is Pentatricopeptide repeat-containing protein At2g16880, found in Arabidopsis thaliana (Mouse-ear cress).